We begin with the raw amino-acid sequence, 544 residues long: Serine/threonine-protein kinase PAK 1 (544 aa).

The tract at residues 1 to 77 is disordered; sequence MSNNGLDIQD…KEKERPEISL (77 aa). Serine 2 is modified (N-acetylserine). Serine 21 is modified (phosphoserine; by PKB and autocatalysis). Residues 68–77 are compositionally biased toward basic and acidic residues; sequence KEKERPEISL. The tract at residues 70-140 is autoregulatory region; that stretch reads KERPEISLPS…YNSKKTSNSQ (71 aa). Residues 75–88 form the CRIB domain; that stretch reads ISLPSDFEHTIHVG. The GTPase-binding stretch occupies residues 75 to 105; it reads ISLPSDFEHTIHVGFDAVTGEFTGMPEQWAR. Residue threonine 84 is modified to Phosphothreonine; by OXSR1. Position 115 is a phosphoserine (serine 115). Tyrosine 131 and tyrosine 142 each carry phosphotyrosine. Phosphoserine; by autocatalysis occurs at positions 144 and 149. A Phosphotyrosine; by JAK2 modification is found at tyrosine 153. Positions 161-193 are disordered; it reads VKAVSETPAVPPVSEDEDDDDDGTPPPVIAPRP. A Phosphoserine modification is found at serine 174. Over residues 174-183 the composition is skewed to acidic residues; it reads SEDEDDDDDG. Phosphothreonine is present on threonine 184. A Phosphoserine; by autocatalysis modification is found at serine 198. Tyrosine 200 carries the phosphotyrosine; by JAK2 modification. The residue at position 203 (serine 203) is a Phosphoserine; by autocatalysis. Residues threonine 211 and threonine 218 each carry the phosphothreonine modification. Residues 212 to 250 are disordered; the sequence is PTRDVATSPISPTENNTTPPDALTRNTEKQKKKPKMSDE. A phosphoserine mark is found at serine 219 and serine 222. A compositionally biased stretch (polar residues) spans 219–230; sequence SPISPTENNTTP. Threonine 224, threonine 228, and threonine 229 each carry phosphothreonine. Residues 269–520 form the Protein kinase domain; it reads YTRFEKIGQG…AKELLQHQFL (252 aa). Position 275 to 283 (275 to 283) interacts with ATP; the sequence is IGQGASGTV. Position 284 is a phosphotyrosine; by JAK2 (tyrosine 284). Lysine 298 serves as a coordination point for ATP. Aspartate 388 acts as the Proton acceptor in catalysis. Position 422 is a phosphothreonine; by autocatalysis, BRSK2 and PDPK1 (threonine 422).

This sequence belongs to the protein kinase superfamily. STE Ser/Thr protein kinase family. STE20 subfamily. As to quaternary structure, homodimer in its autoinhibited state. Active as monomer. Interacts with GIT1. Component of cytoplasmic complexes, which also contains PXN, ARHGEF7 and GIT1. Interacts with NISCH. Interacts with DVL1; mediates the formation of a DVL1, MUSK and PAK1 ternary complex involved in AChR clustering. Binds to the caspase-cleaved p110 isoform of CDC2L1 and CDC2L2, p110C, but not the full-length proteins. Interacts with ARHGEF7. Interacts tightly with GTP-bound but not GDP-bound CDC42/P21 and RAC1. Probably found in a ternary complex composed of DSCAM, PAK1 and RAC1. Interacts with DSCAM (via cytoplasmic domain); the interaction is direct and enhanced in presence of RAC1. Interacts with SCRIB. Interacts with PDPK1. Interacts (via kinase domain) with RAF1. Interacts with NCK1 and NCK2. Interacts with TBCB. Interacts with BRSK2. Interacts with SNAI1. Interacts with CIB1 (via N-terminal region); the interaction is direct, promotes PAK1 activity and occurs in a calcium-dependent manner. Interacts with INPP5K. Interacts with gamma-tubulin. Interacts with RHOU; the interaction promotes PAK1 activation. The cofactor is Mg(2+). Post-translationally, autophosphorylated in trans, meaning that in a dimer, one kinase molecule phosphorylates the other one. Activated by autophosphorylation at Thr-422 in response to a conformation change, triggered by interaction with GTP-bound CDC42 or RAC1. Activated by phosphorylation at Thr-422 by BRSK2 and by PDPK1. Phosphorylated by JAK2 in response to PRL; this increases PAK1 kinase activity. Phosphorylated at Ser-21 by PKB/AKT; this reduces interaction with NCK1 and association with focal adhesion sites. Upon DNA damage, phosphorylated at Thr-211 and translocates to the nucleoplasm. Phosphorylated at tyrosine residues, which can be enhanced by NTN1.

The protein resides in the cytoplasm. It is found in the cell junction. Its subcellular location is the focal adhesion. The protein localises to the cell projection. It localises to the lamellipodium. The protein resides in the cell membrane. It is found in the ruffle membrane. Its subcellular location is the invadopodium. The protein localises to the nucleus. It localises to the nucleoplasm. The protein resides in the chromosome. It is found in the cytoskeleton. Its subcellular location is the microtubule organizing center. The protein localises to the centrosome. The enzyme catalyses L-seryl-[protein] + ATP = O-phospho-L-seryl-[protein] + ADP + H(+). It carries out the reaction L-threonyl-[protein] + ATP = O-phospho-L-threonyl-[protein] + ADP + H(+). Its activity is regulated as follows. Phosphorylation of Thr-84 by OXSR1 inhibits activation. Activated by binding small G proteins. Binding of GTP-bound CDC42 or RAC1 to the autoregulatory region releases monomers from the autoinhibited dimer, and enables activation by phosphorylation of Thr-422. In terms of biological role, protein kinase involved in intracellular signaling pathways downstream of integrins and receptor-type kinases that plays an important role in cytoskeleton dynamics, in cell adhesion, migration, proliferation, apoptosis, mitosis, and in vesicle-mediated transport processes. Can directly phosphorylate BAD and protects cells against apoptosis. Activated by interaction with CDC42 and RAC1. Functions as a GTPase effector that links the Rho-related GTPases CDC42 and RAC1 to the JNK MAP kinase pathway. Phosphorylates and activates MAP2K1, and thereby mediates activation of downstream MAP kinases. Involved in the reorganization of the actin cytoskeleton, actin stress fibers and of focal adhesion complexes. Phosphorylates the tubulin chaperone TBCB and thereby plays a role in the regulation of microtubule biogenesis and organization of the tubulin cytoskeleton. Plays a role in the regulation of insulin secretion in response to elevated glucose levels. Part of a ternary complex that contains PAK1, DVL1 and MUSK that is important for MUSK-dependent regulation of AChR clustering during the formation of the neuromuscular junction (NMJ). Activity is inhibited in cells undergoing apoptosis, potentially due to binding of CDC2L1 and CDC2L2. Phosphorylates MYL9/MLC2. Phosphorylates RAF1 at 'Ser-338' and 'Ser-339' resulting in: activation of RAF1, stimulation of RAF1 translocation to mitochondria, phosphorylation of BAD by RAF1, and RAF1 binding to BCL2. Phosphorylates SNAI1 at 'Ser-246' promoting its transcriptional repressor activity by increasing its accumulation in the nucleus. In podocytes, promotes NR3C2 nuclear localization. Required for atypical chemokine receptor ACKR2-induced phosphorylation of LIMK1 and cofilin (CFL1) and for the up-regulation of ACKR2 from endosomal compartment to cell membrane, increasing its efficiency in chemokine uptake and degradation. In synapses, seems to mediate the regulation of F-actin cluster formation performed by SHANK3, maybe through CFL1 phosphorylation and inactivation. Plays a role in RUFY3-mediated facilitating gastric cancer cells migration and invasion. In response to DNA damage, phosphorylates MORC2 which activates its ATPase activity and facilitates chromatin remodeling. In neurons, plays a crucial role in regulating GABA(A) receptor synaptic stability and hence GABAergic inhibitory synaptic transmission through its role in F-actin stabilization. In hippocampal neurons, necessary for the formation of dendritic spines and excitatory synapses; this function is dependent on kinase activity and may be exerted by the regulation of actomyosin contractility through the phosphorylation of myosin II regulatory light chain (MLC). Along with GIT1, positively regulates microtubule nucleation during interphase. Phosphorylates FXR1, promoting its localization to stress granules and activity. Phosphorylates ILK on 'Thr-173' and 'Ser-246', promoting nuclear export of ILK. The polypeptide is Serine/threonine-protein kinase PAK 1 (Bos taurus (Bovine)).